The chain runs to 77 residues: NAD(P)H-quinone oxidoreductase subunit L (77 aa).

A run of 2 helical transmembrane segments spans residues 12-32 and 47-67; these read LIAY…LLFY and LGIY…SPFL.

Belongs to the complex I NdhL subunit family. NDH-1 can be composed of about 15 different subunits; different subcomplexes with different compositions have been identified which probably have different functions.

The protein resides in the cellular thylakoid membrane. It carries out the reaction a plastoquinone + NADH + (n+1) H(+)(in) = a plastoquinol + NAD(+) + n H(+)(out). The catalysed reaction is a plastoquinone + NADPH + (n+1) H(+)(in) = a plastoquinol + NADP(+) + n H(+)(out). Functionally, NDH-1 shuttles electrons from an unknown electron donor, via FMN and iron-sulfur (Fe-S) centers, to quinones in the respiratory and/or the photosynthetic chain. The immediate electron acceptor for the enzyme in this species is believed to be plastoquinone. Couples the redox reaction to proton translocation, and thus conserves the redox energy in a proton gradient. Cyanobacterial NDH-1 also plays a role in inorganic carbon-concentration. This is NAD(P)H-quinone oxidoreductase subunit L from Prochlorococcus marinus (strain MIT 9301).